The primary structure comprises 281 residues: Pantothenate synthetase (281 aa).

An ATP-binding site is contributed by 30–37 (MGYLHEGH). Residue His-37 is the Proton donor of the active site. Gln-61 contributes to the (R)-pantoate binding site. Residue Gln-61 coordinates beta-alanine. Residue 147-150 (GEKD) coordinates ATP. Gln-153 lines the (R)-pantoate pocket. ATP contacts are provided by residues Ile-176 and 184-187 (KSSR).

It belongs to the pantothenate synthetase family. As to quaternary structure, homodimer.

It localises to the cytoplasm. It carries out the reaction (R)-pantoate + beta-alanine + ATP = (R)-pantothenate + AMP + diphosphate + H(+). It participates in cofactor biosynthesis; (R)-pantothenate biosynthesis; (R)-pantothenate from (R)-pantoate and beta-alanine: step 1/1. Catalyzes the condensation of pantoate with beta-alanine in an ATP-dependent reaction via a pantoyl-adenylate intermediate. The protein is Pantothenate synthetase of Clostridium botulinum (strain 657 / Type Ba4).